Here is a 265-residue protein sequence, read N- to C-terminus: 4-hydroxy-tetrahydrodipicolinate reductase (265 aa).

NAD(+) is bound by residues 7–12 (GASGRM) and Asp33. Residue Arg34 participates in NADP(+) binding. NAD(+)-binding positions include 96–98 (GTT) and 120–123 (AANM). The active-site Proton donor/acceptor is His153. His154 contributes to the (S)-2,3,4,5-tetrahydrodipicolinate binding site. Lys157 functions as the Proton donor in the catalytic mechanism. 163–164 (GT) is a (S)-2,3,4,5-tetrahydrodipicolinate binding site.

Belongs to the DapB family.

The protein localises to the cytoplasm. The enzyme catalyses (S)-2,3,4,5-tetrahydrodipicolinate + NAD(+) + H2O = (2S,4S)-4-hydroxy-2,3,4,5-tetrahydrodipicolinate + NADH + H(+). It catalyses the reaction (S)-2,3,4,5-tetrahydrodipicolinate + NADP(+) + H2O = (2S,4S)-4-hydroxy-2,3,4,5-tetrahydrodipicolinate + NADPH + H(+). It functions in the pathway amino-acid biosynthesis; L-lysine biosynthesis via DAP pathway; (S)-tetrahydrodipicolinate from L-aspartate: step 4/4. Functionally, catalyzes the conversion of 4-hydroxy-tetrahydrodipicolinate (HTPA) to tetrahydrodipicolinate. The chain is 4-hydroxy-tetrahydrodipicolinate reductase from Burkholderia lata (strain ATCC 17760 / DSM 23089 / LMG 22485 / NCIMB 9086 / R18194 / 383).